We begin with the raw amino-acid sequence, 299 residues long: Muscleblind-like protein (299 aa).

C3H1-type zinc fingers lie at residues 38–66 (WLQVEVCREFLRGQCARSDQECKFAHPPP) and 72–100 (QGRVTACYDSIKGRCTRENPKCKYLHPPQ).

This sequence belongs to the muscleblind family.

It localises to the nucleus. Binds to RNA with repeat sequences CUG and CCUG. This is Muscleblind-like protein from Caenorhabditis briggsae.